We begin with the raw amino-acid sequence, 277 residues long: Tryptophan synthase alpha chain (277 aa).

Residues Glu-50 and Asp-61 each act as proton acceptor in the active site.

The protein belongs to the TrpA family. As to quaternary structure, tetramer of two alpha and two beta chains.

It carries out the reaction (1S,2R)-1-C-(indol-3-yl)glycerol 3-phosphate + L-serine = D-glyceraldehyde 3-phosphate + L-tryptophan + H2O. It functions in the pathway amino-acid biosynthesis; L-tryptophan biosynthesis; L-tryptophan from chorismate: step 5/5. Functionally, the alpha subunit is responsible for the aldol cleavage of indoleglycerol phosphate to indole and glyceraldehyde 3-phosphate. The chain is Tryptophan synthase alpha chain from Beijerinckia indica subsp. indica (strain ATCC 9039 / DSM 1715 / NCIMB 8712).